A 448-amino-acid chain; its full sequence is Phosphoglucosamine mutase (448 aa).

Ser102 (phosphoserine intermediate) is an active-site residue. 4 residues coordinate Mg(2+): Ser102, Asp243, Asp245, and Asp247. Ser102 is modified (phosphoserine).

Belongs to the phosphohexose mutase family. The cofactor is Mg(2+). Post-translationally, activated by phosphorylation.

The catalysed reaction is alpha-D-glucosamine 1-phosphate = D-glucosamine 6-phosphate. In terms of biological role, catalyzes the conversion of glucosamine-6-phosphate to glucosamine-1-phosphate. The polypeptide is Phosphoglucosamine mutase (Mycobacterium bovis (strain ATCC BAA-935 / AF2122/97)).